We begin with the raw amino-acid sequence, 140 residues long: Phosphopantetheine adenylyltransferase (140 aa).

Residue S9 coordinates substrate. Residues 9 to 10 (SF) and H17 each bind ATP. Residues K41, T74, and R88 each contribute to the substrate site. ATP is bound by residues 89 to 91 (GLR), E99, and 124 to 130 (KRSLSST).

It belongs to the bacterial CoaD family. As to quaternary structure, homohexamer. The cofactor is Mg(2+).

It localises to the cytoplasm. It carries out the reaction (R)-4'-phosphopantetheine + ATP + H(+) = 3'-dephospho-CoA + diphosphate. It functions in the pathway cofactor biosynthesis; coenzyme A biosynthesis; CoA from (R)-pantothenate: step 4/5. In terms of biological role, reversibly transfers an adenylyl group from ATP to 4'-phosphopantetheine, yielding dephospho-CoA (dPCoA) and pyrophosphate. This is Phosphopantetheine adenylyltransferase from Mycoplasma mycoides subsp. mycoides SC (strain CCUG 32753 / NCTC 10114 / PG1).